The sequence spans 639 residues: Threonine--tRNA ligase (639 aa).

Positions Met1–Thr61 constitute a TGS domain. The segment at Asp242–Pro533 is catalytic. Residues Cys333, His384, and His510 each coordinate Zn(2+).

This sequence belongs to the class-II aminoacyl-tRNA synthetase family. Homodimer. Zn(2+) serves as cofactor.

It localises to the cytoplasm. It catalyses the reaction tRNA(Thr) + L-threonine + ATP = L-threonyl-tRNA(Thr) + AMP + diphosphate + H(+). Functionally, catalyzes the attachment of threonine to tRNA(Thr) in a two-step reaction: L-threonine is first activated by ATP to form Thr-AMP and then transferred to the acceptor end of tRNA(Thr). Also edits incorrectly charged L-seryl-tRNA(Thr). The protein is Threonine--tRNA ligase of Verminephrobacter eiseniae (strain EF01-2).